An 834-amino-acid chain; its full sequence is Structure-specific endonuclease subunit SLX4 (834 aa).

Disordered regions lie at residues Arg80–Thr105, Thr272–Lys307, Gln332–Val372, Gly401–Ala421, Glu603–Leu649, and Ala720–Pro740. The segment covering Pro279–Gln295 has biased composition (polar residues). A compositionally biased stretch (basic residues) spans Gln296–Lys305. Composition is skewed to polar residues over residues Ser345–Asn366 and Asp412–Ala421. Basic and acidic residues predominate over residues Asp611–Pro630. The segment covering Gln729 to Pro740 has biased composition (low complexity).

The protein belongs to the SLX4 family. As to quaternary structure, forms a heterodimer with SLX1. Phosphorylated in response to DNA damage.

The protein resides in the nucleus. Functionally, regulatory subunit of the SLX1-SLX4 structure-specific endonuclease that resolves DNA secondary structures generated during DNA repair and recombination. Has endonuclease activity towards branched DNA substrates, introducing single-strand cuts in duplex DNA close to junctions with ss-DNA. This chain is Structure-specific endonuclease subunit SLX4, found in Ajellomyces capsulatus (strain NAm1 / WU24) (Darling's disease fungus).